We begin with the raw amino-acid sequence, 474 residues long: Phenylalanine--tRNA ligase alpha subunit (474 aa).

L-phenylalanine is bound by residues T317, 356 to 358 (QLE), and Y396. Residue E398 coordinates Mg(2+). An L-phenylalanine-binding site is contributed by F421.

It belongs to the class-II aminoacyl-tRNA synthetase family. Phe-tRNA synthetase alpha subunit type 2 subfamily. As to quaternary structure, tetramer of two alpha and two beta subunits. Mg(2+) is required as a cofactor.

It localises to the cytoplasm. It carries out the reaction tRNA(Phe) + L-phenylalanine + ATP = L-phenylalanyl-tRNA(Phe) + AMP + diphosphate + H(+). The sequence is that of Phenylalanine--tRNA ligase alpha subunit from Archaeoglobus fulgidus (strain ATCC 49558 / DSM 4304 / JCM 9628 / NBRC 100126 / VC-16).